A 382-amino-acid polypeptide reads, in one-letter code: Ribosomal RNA large subunit methyltransferase F (382 aa).

Disordered regions lie at residues 1 to 53 (MTKP…LHRD) and 269 to 288 (NRAS…KSQL). Basic residues predominate over residues 8-24 (ASRKPVTKSGRNSKRSR). A compositionally biased stretch (basic and acidic residues) spans 269–286 (NRASKGHKLEPKAPKDKS).

The protein belongs to the methyltransferase superfamily. METTL16/RlmF family.

It localises to the cytoplasm. The catalysed reaction is adenosine(1618) in 23S rRNA + S-adenosyl-L-methionine = N(6)-methyladenosine(1618) in 23S rRNA + S-adenosyl-L-homocysteine + H(+). Specifically methylates the adenine in position 1618 of 23S rRNA. The sequence is that of Ribosomal RNA large subunit methyltransferase F from Shewanella woodyi (strain ATCC 51908 / MS32).